The following is a 1197-amino-acid chain: ATP-dependent helicase/nuclease subunit A (1197 aa).

Residues 2 to 458 (RQWTKEQQAA…IDLAKNFRSR (457 aa)) enclose the UvrD-like helicase ATP-binding domain. An ATP-binding site is contributed by 23–30 (AAAGSGKT). Residues 485 to 774 (RAALYQGTEF…RIMSIHKSKG (290 aa)) enclose the UvrD-like helicase C-terminal domain.

Belongs to the helicase family. AddA subfamily. Heterodimer of AddA and AddB/RexB. Requires Mg(2+) as cofactor.

It catalyses the reaction Couples ATP hydrolysis with the unwinding of duplex DNA by translocating in the 3'-5' direction.. The catalysed reaction is ATP + H2O = ADP + phosphate + H(+). Functionally, the heterodimer acts as both an ATP-dependent DNA helicase and an ATP-dependent, dual-direction single-stranded exonuclease. Recognizes the chi site generating a DNA molecule suitable for the initiation of homologous recombination. The AddA nuclease domain is required for chi fragment generation; this subunit has the helicase and 3' -&gt; 5' nuclease activities. The protein is ATP-dependent helicase/nuclease subunit A of Alkaliphilus oremlandii (strain OhILAs) (Clostridium oremlandii (strain OhILAs)).